Reading from the N-terminus, the 285-residue chain is Iron uptake system component EfeM (285 aa).

An N-terminal signal peptide occupies residues 1–34; sequence MTYPLLTRKTLMKKTPLALLLTLGLLQTPLAAFA.

Belongs to the EfeM/EfeO family. As to quaternary structure, component of the iron transporter efeUOB/M complex composed of EfeU, EfeM and EfeB.

The protein resides in the periplasm. Its function is as follows. Part of the iron transporter system efeUOB/M involved in iron import. Specifically binds Fe(3+), which is produced by EfeB-mediated oxidation of Fe(2+), and delivers it to the cell inner membrane permease EfeU. Also binds Zn(2+) and Cu(2+) in vitro. This chain is Iron uptake system component EfeM, found in Pseudomonas syringae pv. syringae (strain B728a).